The sequence spans 179 residues: Large ribosomal subunit protein uL6 (179 aa).

It belongs to the universal ribosomal protein uL6 family. In terms of assembly, part of the 50S ribosomal subunit.

Its function is as follows. This protein binds to the 23S rRNA, and is important in its secondary structure. It is located near the subunit interface in the base of the L7/L12 stalk, and near the tRNA binding site of the peptidyltransferase center. This is Large ribosomal subunit protein uL6 from Bacillus velezensis (strain DSM 23117 / BGSC 10A6 / LMG 26770 / FZB42) (Bacillus amyloliquefaciens subsp. plantarum).